The sequence spans 168 residues: PTS system glucose-specific EIIA component (168 aa).

The region spanning Asp38–Asn142 is the PTS EIIA type-1 domain. Residues His75 and His90 each coordinate Zn(2+). His90 functions as the Tele-phosphohistidine intermediate; for EIIA activity in the catalytic mechanism. A Phosphohistidine; by HPr modification is found at His90.

The cofactor is Zn(2+).

It is found in the cytoplasm. Its function is as follows. The phosphoenolpyruvate-dependent sugar phosphotransferase system (sugar PTS), a major carbohydrate active transport system, catalyzes the phosphorylation of incoming sugar substrates concomitantly with their translocation across the cell membrane. The enzyme II complex composed of PtsG and Crr is involved in glucose transport. This Buchnera aphidicola subsp. Baizongia pistaciae (strain Bp) protein is PTS system glucose-specific EIIA component (crr).